The sequence spans 195 residues: NADH-quinone oxidoreductase subunit B (195 aa).

[4Fe-4S] cluster-binding residues include Cys-74, Cys-75, Cys-139, and Cys-169.

This sequence belongs to the complex I 20 kDa subunit family. NDH-1 is composed of 14 different subunits. Subunits NuoB, C, D, E, F, and G constitute the peripheral sector of the complex. It depends on [4Fe-4S] cluster as a cofactor.

It localises to the cell inner membrane. The enzyme catalyses a quinone + NADH + 5 H(+)(in) = a quinol + NAD(+) + 4 H(+)(out). Its function is as follows. NDH-1 shuttles electrons from NADH, via FMN and iron-sulfur (Fe-S) centers, to quinones in the respiratory chain. The immediate electron acceptor for the enzyme in this species is believed to be ubiquinone. Couples the redox reaction to proton translocation (for every two electrons transferred, four hydrogen ions are translocated across the cytoplasmic membrane), and thus conserves the redox energy in a proton gradient. This chain is NADH-quinone oxidoreductase subunit B, found in Methylobacterium sp. (strain 4-46).